A 384-amino-acid chain; its full sequence is Bifunctional enzyme IspD/IspF (384 aa).

2-C-methyl-D-erythritol 4-phosphate cytidylyltransferase regions lie at residues 1–227 (MAKV…EGEQ) and 1–228 (MAKV…GEQR). The tract at residues 228–384 (RIGSGFDVHR…QATALITLPF (157 aa)) is 2-C-methyl-D-erythritol 2,4-cyclodiphosphate synthase. The a divalent metal cation site is built by aspartate 234 and histidine 236. 4-CDP-2-C-methyl-D-erythritol 2-phosphate-binding positions include 234–236 (DVH) and 260–261 (HS). Histidine 268 is an a divalent metal cation binding site. 4-CDP-2-C-methyl-D-erythritol 2-phosphate contacts are provided by residues 282 to 284 (DIG), 358 to 361 (TTTE), phenylalanine 365, and arginine 368.

It in the N-terminal section; belongs to the IspD/TarI cytidylyltransferase family. IspD subfamily. In the C-terminal section; belongs to the IspF family. Requires a divalent metal cation as cofactor.

It carries out the reaction 2-C-methyl-D-erythritol 4-phosphate + CTP + H(+) = 4-CDP-2-C-methyl-D-erythritol + diphosphate. The catalysed reaction is 4-CDP-2-C-methyl-D-erythritol 2-phosphate = 2-C-methyl-D-erythritol 2,4-cyclic diphosphate + CMP. It participates in isoprenoid biosynthesis; isopentenyl diphosphate biosynthesis via DXP pathway; isopentenyl diphosphate from 1-deoxy-D-xylulose 5-phosphate: step 2/6. Its pathway is isoprenoid biosynthesis; isopentenyl diphosphate biosynthesis via DXP pathway; isopentenyl diphosphate from 1-deoxy-D-xylulose 5-phosphate: step 4/6. Bifunctional enzyme that catalyzes the formation of 4-diphosphocytidyl-2-C-methyl-D-erythritol from CTP and 2-C-methyl-D-erythritol 4-phosphate (MEP) (IspD), and catalyzes the conversion of 4-diphosphocytidyl-2-C-methyl-D-erythritol 2-phosphate (CDP-ME2P) to 2-C-methyl-D-erythritol 2,4-cyclodiphosphate (ME-CPP) with a corresponding release of cytidine 5-monophosphate (CMP) (IspF). The chain is Bifunctional enzyme IspD/IspF from Rhodospirillum rubrum (strain ATCC 11170 / ATH 1.1.1 / DSM 467 / LMG 4362 / NCIMB 8255 / S1).